Reading from the N-terminus, the 559-residue chain is NXPE family member 3 (559 aa).

Positions 1-30 (MWTNFFKLRLFCCLLAVLMVVVLVINVTQV) are cleaved as a signal peptide. Asparagine 237, asparagine 292, and asparagine 346 each carry an N-linked (GlcNAc...) asparagine glycan.

This sequence belongs to the NXPE family.

Its subcellular location is the secreted. The polypeptide is NXPE family member 3 (NXPE3) (Homo sapiens (Human)).